Consider the following 145-residue polypeptide: 3-dehydroquinate dehydratase (145 aa).

The active-site Proton acceptor is Tyr23. Asn75, His81, and Asp88 together coordinate substrate. Catalysis depends on His101, which acts as the Proton donor. Residues 102-103 (IS) and Arg112 contribute to the substrate site.

It belongs to the type-II 3-dehydroquinase family. As to quaternary structure, homododecamer.

It catalyses the reaction 3-dehydroquinate = 3-dehydroshikimate + H2O. Its pathway is metabolic intermediate biosynthesis; chorismate biosynthesis; chorismate from D-erythrose 4-phosphate and phosphoenolpyruvate: step 3/7. Catalyzes a trans-dehydration via an enolate intermediate. The chain is 3-dehydroquinate dehydratase from Caldicellulosiruptor bescii (strain ATCC BAA-1888 / DSM 6725 / KCTC 15123 / Z-1320) (Anaerocellum thermophilum).